A 356-amino-acid chain; its full sequence is Photosystem II protein D1 4 (356 aa).

3 helical membrane-spanning segments follow: residues 32–49 (YIGWFGVLSIPTLLAATT), 121–136 (HFLIGIWCLLGRFWEL), and 145–159 (WIAVAYSAPVIAATS). Residue His-121 participates in chlorophyll a binding. [CaMn4O5] cluster is bound by residues Asp-173 and Asp-192. The chain crosses the membrane as a helical span at residues 200–221 (FHMLGVAGVFGGALLSSLHGSL). A chlorophyll a-binding site is contributed by His-201. A quinone is bound at residue His-218. Fe cation is bound by residues His-218 and His-276. A helical transmembrane segment spans residues 278–292 (LLAALPTIGIWFAAM). His-336 contributes to the [CaMn4O5] cluster binding site.

This sequence belongs to the reaction center PufL/M/PsbA/D family. PSII is composed of 1 copy each of membrane proteins PsbA, PsbB, PsbC, PsbD, PsbE, PsbF, PsbH, PsbI, PsbJ, PsbK, PsbL, PsbM, PsbT, PsbX, PsbY, PsbZ, Psb30/Ycf12, peripheral proteins PsbO, CyanoQ (PsbQ), PsbU, PsbV and a large number of cofactors. It forms dimeric complexes. The cofactor is The D1/D2 heterodimer binds P680, chlorophylls that are the primary electron donor of PSII, and subsequent electron acceptors. It shares a non-heme iron and each subunit binds pheophytin, quinone, additional chlorophylls, carotenoids and lipids. D1 provides most of the ligands for the Mn4-Ca-O5 cluster of the oxygen-evolving complex (OEC). There is also a Cl(-1) ion associated with D1 and D2, which is required for oxygen evolution. The PSII complex binds additional chlorophylls, carotenoids and specific lipids.. Post-translationally, tyr-164 forms a radical intermediate that is referred to as redox-active TyrZ, YZ or Y-Z.

It localises to the cellular thylakoid membrane. It carries out the reaction 2 a plastoquinone + 4 hnu + 2 H2O = 2 a plastoquinol + O2. Functionally, photosystem II (PSII) is a light-driven water:plastoquinone oxidoreductase that uses light energy to abstract electrons from H(2)O, generating O(2) and a proton gradient subsequently used for ATP formation. It consists of a core antenna complex that captures photons, and an electron transfer chain that converts photonic excitation into a charge separation. The D1/D2 (PsbA/PsbD) reaction center heterodimer binds P680, the primary electron donor of PSII as well as several subsequent electron acceptors. The protein is Photosystem II protein D1 4 of Trichormus variabilis (strain ATCC 29413 / PCC 7937) (Anabaena variabilis).